Consider the following 262-residue polypeptide: Phosphatidylserine decarboxylase proenzyme (262 aa).

Active-site charge relay system; for autoendoproteolytic cleavage activity residues include Asp-86, His-142, and Ser-226. The active-site Schiff-base intermediate with substrate; via pyruvic acid; for decarboxylase activity is Ser-226. Pyruvic acid (Ser); by autocatalysis is present on Ser-226.

Belongs to the phosphatidylserine decarboxylase family. PSD-B subfamily. Prokaryotic type I sub-subfamily. In terms of assembly, heterodimer of a large membrane-associated beta subunit and a small pyruvoyl-containing alpha subunit. Pyruvate serves as cofactor. In terms of processing, is synthesized initially as an inactive proenzyme. Formation of the active enzyme involves a self-maturation process in which the active site pyruvoyl group is generated from an internal serine residue via an autocatalytic post-translational modification. Two non-identical subunits are generated from the proenzyme in this reaction, and the pyruvate is formed at the N-terminus of the alpha chain, which is derived from the carboxyl end of the proenzyme. The autoendoproteolytic cleavage occurs by a canonical serine protease mechanism, in which the side chain hydroxyl group of the serine supplies its oxygen atom to form the C-terminus of the beta chain, while the remainder of the serine residue undergoes an oxidative deamination to produce ammonia and the pyruvoyl prosthetic group on the alpha chain. During this reaction, the Ser that is part of the protease active site of the proenzyme becomes the pyruvoyl prosthetic group, which constitutes an essential element of the active site of the mature decarboxylase.

It localises to the cell membrane. The catalysed reaction is a 1,2-diacyl-sn-glycero-3-phospho-L-serine + H(+) = a 1,2-diacyl-sn-glycero-3-phosphoethanolamine + CO2. Its pathway is phospholipid metabolism; phosphatidylethanolamine biosynthesis; phosphatidylethanolamine from CDP-diacylglycerol: step 2/2. In terms of biological role, catalyzes the formation of phosphatidylethanolamine (PtdEtn) from phosphatidylserine (PtdSer). The polypeptide is Phosphatidylserine decarboxylase proenzyme (Bacillus thuringiensis subsp. konkukian (strain 97-27)).